Consider the following 366-residue polypeptide: MAKLSLRNVQKTYAGSVQVVHGIDMEIADGEFIVIVGPSGCGKSTLLRMVAGLETITGGEIHIGDKVVNNLEPAERDIAMVFQNYALYPHMSVYDNMAYGLKIRGMAKAEIAQRVNHAAGILELAPLLDRKPRQLSGGQRQRVAMGRAIVREPAVFLFDEPLSNLDAKLRVQMRLELKELHRRLGTTSLYVTHDQVEAMTLADRMMVLNAGRVEQIGTPLEVYSRPASTFVAGFIGSPPMNLIPVARNAGGDTGAQMRVVAKEGEAANATLGHLPMGLHLPEQALLGLRPEHIEPCAAHEAIAEVDVRVVEALGADSFAYGSLGGQAVVVRLDSHAHVRAGDRLPVTSSAEHLHFFAPDTGKRIEA.

The ABC transporter domain maps to 4-235 (LSLRNVQKTY…PASTFVAGFI (232 aa)). 37 to 44 (GPSGCGKS) provides a ligand contact to ATP.

Belongs to the ABC transporter superfamily. sn-glycerol-3-phosphate importer (TC 3.A.1.1.3) family. In terms of assembly, the complex is composed of two ATP-binding proteins (UgpC), two transmembrane proteins (UgpA and UgpE) and a solute-binding protein (UgpB).

It localises to the cell inner membrane. The catalysed reaction is sn-glycerol 3-phosphate(out) + ATP + H2O = sn-glycerol 3-phosphate(in) + ADP + phosphate + H(+). Functionally, part of the ABC transporter complex UgpBAEC involved in sn-glycerol-3-phosphate (G3P) import. Responsible for energy coupling to the transport system. In Cupriavidus necator (strain ATCC 17699 / DSM 428 / KCTC 22496 / NCIMB 10442 / H16 / Stanier 337) (Ralstonia eutropha), this protein is sn-glycerol-3-phosphate import ATP-binding protein UgpC.